A 631-amino-acid polypeptide reads, in one-letter code: MBT domain-containing protein 1 (631 aa).

A disordered region spans residues 1–31 (MFDGYDSCSEDTSSSSSSEESEEEVAPLPSN). The FCS-type zinc finger occupies 45-80 (PDGKSGMATCEMCGMVGVRDAFYSKTKRFCSVSCSR). 4 residues coordinate Zn(2+): cysteine 54, cysteine 57, cysteine 74, and cysteine 78. The residue at position 115 (lysine 115) is an N6-acetyllysine. MBT repeat units follow at residues 144–248 (FSWG…LVPP), 256–353 (TNWK…IGHR), 354–459 (FKRS…LTPP), and 467–563 (FKWF…LQPP). Residues 563–631 (PASQSSRESQ…SATVYIKQEP (69 aa)) form a disordered region. Positions 564–576 (ASQSSRESQSASS) are enriched in low complexity. Positions 577–593 (KQKKKAKSQQYKGHKKM) are enriched in basic residues.

Monomer. Component of the NuA4 histone acetyltransferase complex. Interacts with EPC1; interaction is direct and promotes recruitment of MBTD1 into the NuA4 histone acetyltransferase complex.

The protein resides in the nucleus. The protein localises to the chromosome. Functionally, chromatin reader component of the NuA4 histone acetyltransferase complex, a multiprotein complex involved in transcriptional activation of select genes principally by acetylation of nucleosomal histones H4 and H2A. The NuA4 complex plays a direct role in repair of DNA double-strand breaks (DSBs) by promoting homologous recombination (HR). MBTD1 specifically recognizes and binds monomethylated and dimethylated 'Lys-20' on histone H4 (H4K20me1 and H4K20me2, respectively). In the NuA4 complex, MBTD1 promotes recruitment of the complex to H4K20me marks by competing with TP53BP1 for binding to H4K20me. Following recruitment to H4K20me at DNA breaks, the NuA4 complex catalyzes acetylation of 'Lys-15' on histone H2A (H2AK15), blocking the ubiquitination mark required for TP53BP1 localization at DNA breaks, thereby promoting homologous recombination (HR). The sequence is that of MBT domain-containing protein 1 from Mus musculus (Mouse).